The primary structure comprises 1241 residues: RNA polymerase II C-terminal domain phosphatase-like 3 (1241 aa).

Disordered stretches follow at residues 361–402 (DHDA…TTEG), 428–470 (VFKT…HLIY), 505–525 (ISAPTASDQTVKPSAKSRDPR), 578–598 (KRQKSDTDAPKAAGTGGWLED), 677–702 (AIQKPMDPRRAAQLPGSSVQPGVSTP), 720–800 (VLQD…QNGT), and 852–885 (TERDVKHNPSNPNAQDEDVSVSAASVTAAAGPTR). The segment covering 368-378 (PSPTRETTPSL) has biased composition (polar residues). The span at 441 to 466 (GEPNDGNGDVGGEVSSSVVKSSNPGS) shows a compositional bias: low complexity. The segment covering 677–686 (AIQKPMDPRR) has biased composition (basic and acidic residues). 2 stretches are compositionally biased toward polar residues: residues 691–702 (PGSSVQPGVSTP) and 791–800 (PRQNISQNGT). Low complexity predominate over residues 871 to 881 (SVSAASVTAAA). The FCP1 homology domain maps to 923 to 1103 (FASQKLSLVL…GLLGPSLLEL (181 aa)). In terms of domain architecture, BRCT spans 1146-1239 (EQRKILAGCR…QRANENLYAI (94 aa)).

Interacts with RAP74. It depends on Mg(2+) as a cofactor. The cofactor is Co(2+). Mn(2+) is required as a cofactor.

The protein localises to the nucleus. The enzyme catalyses O-phospho-L-seryl-[protein] + H2O = L-seryl-[protein] + phosphate. The catalysed reaction is O-phospho-L-threonyl-[protein] + H2O = L-threonyl-[protein] + phosphate. Its function is as follows. Completely dephosphorylates 'Ser-2', and partially 'Ser-5' and 'Ser-7' of the heptad repeats YSPTSPS in the C-terminal domain (CTD) of the largest RNA polymerase II subunit (RPB1). Involved in defense response. Acts as a negative regulator of immune gene expression and immunity to pathogen infections. Preferentially dephosphorylates 'Ser-2' of RNA polymerase II CTD. This counterregulates the MAP kinase (MAPK) or cyclin-dependent kinase C (CDKC)-mediated phosphorylation of CTD in response to pathogens and upon perception of microbe-associated molecular patterns (MAMPs). MAPKs phosphorylate and activate CDKCs, which are CTD kinases that positively regulate plant innate immunity. Acts as a negative regulator of stress gene transcription involved in abscisic acid (ABA) mediated signaling pathway and cold resistance. Acts as a post-transcriptional gene silencing (PTGS) suppressor. This is RNA polymerase II C-terminal domain phosphatase-like 3 from Arabidopsis thaliana (Mouse-ear cress).